A 360-amino-acid chain; its full sequence is Mitogen-activated protein kinase 1 (360 aa).

A2 is subject to N-acetylalanine. Residues 25–313 (YTNLSYIGEG…VEQALAHPYL (289 aa)) enclose the Protein kinase domain. Residue S29 is modified to Phosphoserine; by SGK1. Residues 31 to 39 (IGEGAYGMV) and K54 each bind ATP. D149 acts as the Proton acceptor in catalysis. Position 185 is a phosphothreonine; by MAP2K1 and MAP2K2 (T185). Residues 185 to 187 (TEY) carry the TXY motif. At Y187 the chain carries Phosphotyrosine; by MAP2K1 and MAP2K2. T190 carries the post-translational modification Phosphothreonine; by autocatalysis. Residues S246, S248, and S284 each carry the phosphoserine modification.

It belongs to the protein kinase superfamily. CMGC Ser/Thr protein kinase family. MAP kinase subfamily. As to quaternary structure, binds both upstream activators and downstream substrates in multimolecular complexes. Interacts with ADAM15, ARHGEF2, ARRB2, DAPK1 (via death domain), HSF4, IER3, IPO7, MKNK2, MORG1, NISCH, PEA15, SGK1, and isoform 1 of NEK2. Interacts (via phosphorylated form) with TPR (via C-terminal region and phosphorylated form); the interaction requires dimerization of MAPK1/ERK2 and increases following EGF stimulation. Interacts with MAP2K1. Interacts with DUSP6. Interacts (phosphorylated form) with CAV2 ('Tyr-19'-phosphorylated form); the interaction, promoted by insulin, leads to nuclear location and MAPK1 activation. MKNK2 isoform 1 binding prevents from dephosphorylation and inactivation. Interacts with DCC. The phosphorylated form interacts with PML. Interacts with STYX. Interacts with CDK2AP2. Interacts with CAVIN4. Interacts with DUSP7; the interaction enhances DUSP7 phosphatase activity. Interacts with GIT1; this interaction is necessary for MAPK1 localization to focal adhesions. Interacts with ZNF263. Interacts with phosphoglycerate kinase PGK1; the interaction is direct, occurs under hypoxic conditions, and promotes interaction between PGK1 and PIN1. Mg(2+) serves as cofactor. Post-translationally, dually phosphorylated on Thr-185 and Tyr-187, which activates the enzyme. Phosphorylated upon FLT3 and KIT signaling. Phosphorylation on Ser-29 by SGK1 results in its activation by enhancing its interaction with MAP2K1/MEK1 and MAP2K2/MEK2. Phosphorylation at Ser-246 and Ser-248 as well as autophosphorylation at Thr-190 promote nuclear localization. Ligand-activated ALK induces tyrosine phosphorylation. Dephosphorylated by PTPRJ at Tyr-187. Dephosphorylated by DUSP1 and DUSP2 at Thr-185 and Tyr-187. In terms of processing, ISGylated. Ubiquitinated by TRIM15 via 'Lys-63'-linked ubiquitination; leading to activation. Deubiquitinated by CYLD.

The protein resides in the nucleus. The protein localises to the cytoplasm. It localises to the cytoskeleton. Its subcellular location is the microtubule organizing center. It is found in the centrosome. The protein resides in the spindle. The protein localises to the membrane. It localises to the caveola. Its subcellular location is the cell junction. It is found in the focal adhesion. It catalyses the reaction L-seryl-[protein] + ATP = O-phospho-L-seryl-[protein] + ADP + H(+). It carries out the reaction L-threonyl-[protein] + ATP = O-phospho-L-threonyl-[protein] + ADP + H(+). Its activity is regulated as follows. Phosphorylated by MAP2K1/MEK1 and MAP2K2/MEK2 on Thr-185 and Tyr-187 in response to external stimuli like insulin or NGF. Both phosphorylations are required for activity. This phosphorylation causes dramatic conformational changes, which enable full activation and interaction of MAPK1/ERK2 with its substrates. Phosphorylation on Ser-29 by SGK1 results in its activation by enhancing its interaction with MAP2K1/MEK1 and MAP2K2/MEK2. Dephosphorylated and inactivated by DUSP1, DUSP3, DUSP6 and DUSP9. Inactivated by pyrimidylpyrrole inhibitors. In terms of biological role, serine/threonine kinase which acts as an essential component of the MAP kinase signal transduction pathway. MAPK1/ERK2 and MAPK3/ERK1 are the 2 MAPKs which play an important role in the MAPK/ERK cascade. They participate also in a signaling cascade initiated by activated KIT and KITLG/SCF. Depending on the cellular context, the MAPK/ERK cascade mediates diverse biological functions such as cell growth, adhesion, survival and differentiation through the regulation of transcription, translation, cytoskeletal rearrangements. The MAPK/ERK cascade also plays a role in initiation and regulation of meiosis, mitosis, and postmitotic functions in differentiated cells by phosphorylating a number of transcription factors. About 160 substrates have already been discovered for ERKs. Many of these substrates are localized in the nucleus, and seem to participate in the regulation of transcription upon stimulation. However, other substrates are found in the cytosol as well as in other cellular organelles, and those are responsible for processes such as translation, mitosis and apoptosis. Moreover, the MAPK/ERK cascade is also involved in the regulation of the endosomal dynamics, including lysosome processing and endosome cycling through the perinuclear recycling compartment (PNRC); as well as in the fragmentation of the Golgi apparatus during mitosis. The substrates include transcription factors (such as ATF2, BCL6, ELK1, ERF, FOS, HSF4 or SPZ1), cytoskeletal elements (such as CANX, CTTN, GJA1, MAP2, MAPT, PXN, SORBS3 or STMN1), regulators of apoptosis (such as BAD, BTG2, CASP9, DAPK1, IER3, MCL1 or PPARG), regulators of translation (such as EIF4EBP1 and FXR1) and a variety of other signaling-related molecules (like ARHGEF2, DCC, FRS2 or GRB10). Protein kinases (such as RAF1, RPS6KA1/RSK1, RPS6KA3/RSK2, RPS6KA2/RSK3, RPS6KA6/RSK4, SYK, MKNK1/MNK1, MKNK2/MNK2, RPS6KA5/MSK1, RPS6KA4/MSK2, MAPKAPK3 or MAPKAPK5) and phosphatases (such as DUSP1, DUSP4, DUSP6 or DUSP16) are other substrates which enable the propagation the MAPK/ERK signal to additional cytosolic and nuclear targets, thereby extending the specificity of the cascade. Mediates phosphorylation of TPR in response to EGF stimulation. May play a role in the spindle assembly checkpoint. Phosphorylates PML and promotes its interaction with PIN1, leading to PML degradation. Phosphorylates CDK2AP2. Phosphorylates phosphoglycerate kinase PGK1 under hypoxic conditions to promote its targeting to the mitochondrion and suppress the formation of acetyl-coenzyme A from pyruvate. Functionally, acts as a transcriptional repressor. Binds to a [GC]AAA[GC] consensus sequence. Repress the expression of interferon gamma-induced genes. Seems to bind to the promoter of CCL5, DMP1, IFIH1, IFITM1, IRF7, IRF9, LAMP3, OAS1, OAS2, OAS3 and STAT1. Transcriptional activity is independent of kinase activity. This Bos taurus (Bovine) protein is Mitogen-activated protein kinase 1.